The primary structure comprises 444 residues: Elongation factor 1-alpha (444 aa).

Residues 15–236 enclose the tr-type G domain; it reads KPHINLAVVG…VLDTFQPPPR (222 aa). Residues 24–31 form a G1 region; that stretch reads GHVDNGKS. Residue 24 to 31 participates in GTP binding; that stretch reads GHVDNGKS. Residue Ser-31 coordinates Mg(2+). Residues 80–84 are G2; it reads GVTIE. A G3 region spans residues 101-104; sequence DLPG. GTP-binding positions include 101 to 105 and 163 to 166; these read DLPGH and NKMD. The tract at residues 163 to 166 is G4; the sequence is NKMD. The segment at 202-204 is G5; it reads SAV.

This sequence belongs to the TRAFAC class translation factor GTPase superfamily. Classic translation factor GTPase family. EF-Tu/EF-1A subfamily.

It localises to the cytoplasm. The enzyme catalyses GTP + H2O = GDP + phosphate + H(+). Its function is as follows. GTP hydrolase that promotes the GTP-dependent binding of aminoacyl-tRNA to the A-site of ribosomes during protein biosynthesis. This is Elongation factor 1-alpha from Pyrobaculum arsenaticum (strain DSM 13514 / JCM 11321 / PZ6).